The sequence spans 815 residues: Protein SEY1 homolog (815 aa).

The Cytoplasmic segment spans residues 1-737 (MRQIIDYDCN…IQSTGRQPQN (737 aa)). Positions 28–260 (TLGFNVISIL…LPKDYTRRIP (233 aa)) constitute a GB1/RHD3-type G domain. 38 to 45 (GCQSTGKS) contributes to the GTP binding site. Residues 298–321 (AKDDILDGYKKSIKDLQKKMEKRE) are a coiled coil. Residues 738–758 (IPWWIYLLIIILGFDEITYVL) traverse the membrane as a helical segment. At 759–761 (TSP) the chain is on the lumenal side. Residues 762–782 (VLVTLLLLLASFIYSYLTGNF) form a helical membrane-spanning segment. Topologically, residues 783–815 (SSFCNYSQQFVIISTKILHYISGAIHSSLDNRK) are cytoplasmic.

Belongs to the TRAFAC class dynamin-like GTPase superfamily. GB1/RHD3 GTPase family. RHD3 subfamily.

Its subcellular location is the endoplasmic reticulum membrane. Probable GTP-binding protein that may be involved in cell development. The sequence is that of Protein SEY1 homolog from Cryptosporidium hominis.